We begin with the raw amino-acid sequence, 510 residues long: NAD(P)H-quinone oxidoreductase subunit 2 A, chloroplastic (510 aa).

A run of 13 helical transmembrane segments spans residues 24–44, 57–77, 99–119, 124–144, 149–169, 183–203, 227–247, 295–315, 323–343, 354–374, 395–415, 418–438, and 484–504; these read LLLF…GLIL, IPWL…ALLF, IFQF…VEYI, MAIT…MFLC, LITI…LSGY, YLLM…WLYG, PGIS…LSPA, WHLL…LIAI, MLAY…IVGD, YMLF…SFGL, ALSL…AGFF, LHLF…IGLL, and MIVC…IIAI.

The protein belongs to the complex I subunit 2 family. In terms of assembly, NDH is composed of at least 16 different subunits, 5 of which are encoded in the nucleus.

It is found in the plastid. The protein localises to the chloroplast thylakoid membrane. It carries out the reaction a plastoquinone + NADH + (n+1) H(+)(in) = a plastoquinol + NAD(+) + n H(+)(out). The enzyme catalyses a plastoquinone + NADPH + (n+1) H(+)(in) = a plastoquinol + NADP(+) + n H(+)(out). In terms of biological role, NDH shuttles electrons from NAD(P)H:plastoquinone, via FMN and iron-sulfur (Fe-S) centers, to quinones in the photosynthetic chain and possibly in a chloroplast respiratory chain. The immediate electron acceptor for the enzyme in this species is believed to be plastoquinone. Couples the redox reaction to proton translocation, and thus conserves the redox energy in a proton gradient. The protein is NAD(P)H-quinone oxidoreductase subunit 2 A, chloroplastic of Carica papaya (Papaya).